Reading from the N-terminus, the 763-residue chain is F-box protein SKP2 (763 aa).

The F-box domain occupies 54-100; sequence KSSLMCLPTKVLLLILRTLDFNTLVTLCQVNSRFYNLITNEFLFQNV. Phosphothreonine is present on threonine 594.

As to quaternary structure, interacts with SKP1. Component of the probable SCF(SKP2) complex containing CDC53, SKP1, RBX1 and SKP2. May interact with ribosomes.

It is found in the cytoplasm. It participates in protein modification; protein ubiquitination. Its function is as follows. Substrate recognition component of a SCF (SKP1-CUL1-F-box protein) E3 ubiquitin-protein ligase complex which mediates the ubiquitination and subsequent proteasomal degradation of target proteins. Probably recognizes and binds to phosphorylated target proteins. Regulates protein levels of sulfur metabolism enzymes. The SCF(SKP2) complex may regulate some transcription factors or regulators of cysteine and methionine biosynthesis. The protein is F-box protein SKP2 (SKP2) of Saccharomyces cerevisiae (strain ATCC 204508 / S288c) (Baker's yeast).